The primary structure comprises 662 residues: Glutathione hydrolase 7 (662 aa).

Residues 1-106 are Cytoplasmic-facing; sequence MAAENEASQE…AAECSCRQDG (106 aa). Phosphoserine occurs at positions 17, 72, 79, and 83. Residues 26-90 form a disordered region; that stretch reads SFPRLPEDEP…DGSPLRETRK (65 aa). Residues 72 to 83 are compositionally biased toward low complexity; the sequence is SSSSEMGSQDGS. Residues 107 to 127 form a helical; Signal-anchor for type II membrane protein membrane-spanning segment; that stretch reads LTVIVTACLTFATGVTVALVM. Over 128 to 662 the chain is Extracellular; the sequence is QIYFGDPQIF…SPDAAGATIL (535 aa). 10 N-linked (GlcNAc...) asparagine glycosylation sites follow: Asn198, Asn267, Asn283, Asn330, Asn353, Asn394, Asn452, Asn519, Asn523, and Asn586.

Belongs to the gamma-glutamyltransferase family. As to quaternary structure, interacts with TLCD3A. In terms of assembly, heterodimer composed of the light and heavy chains. The active site is located in the light chain. Cleaved by autocatalysis into a large and a small subunit and the autocatalytic cleavage is essential to the functional activation of the enzyme. Widely expressed, but at low level, except in the airway epithelial cells. Detected in brain, heart, kidney, liver, lung, spleen, testis and trachea.

It is found in the membrane. It catalyses the reaction an N-terminal (5-L-glutamyl)-[peptide] + an alpha-amino acid = 5-L-glutamyl amino acid + an N-terminal L-alpha-aminoacyl-[peptide]. The enzyme catalyses glutathione + H2O = L-cysteinylglycine + L-glutamate. The catalysed reaction is an S-substituted glutathione + H2O = an S-substituted L-cysteinylglycine + L-glutamate. It participates in sulfur metabolism; glutathione metabolism. Its function is as follows. Hydrolyzes and transfers gamma-glutamyl moieties from glutathione and other gamma-glutamyl compounds to acceptors. The protein is Glutathione hydrolase 7 of Homo sapiens (Human).